A 348-amino-acid chain; its full sequence is Protein RecA (348 aa).

Residue 64-71 (GPESSGKT) participates in ATP binding. The segment covering 325–335 (YEIDGSNKEPL) has biased composition (basic and acidic residues). The tract at residues 325–348 (YEIDGSNKEPLDEGEETLSLLDDE) is disordered. A compositionally biased stretch (acidic residues) spans 336–348 (DEGEETLSLLDDE).

This sequence belongs to the RecA family.

It is found in the cytoplasm. Functionally, can catalyze the hydrolysis of ATP in the presence of single-stranded DNA, the ATP-dependent uptake of single-stranded DNA by duplex DNA, and the ATP-dependent hybridization of homologous single-stranded DNAs. It interacts with LexA causing its activation and leading to its autocatalytic cleavage. This Listeria monocytogenes serotype 4b (strain CLIP80459) protein is Protein RecA.